A 360-amino-acid polypeptide reads, in one-letter code: MNYTESSPLRESTAIGFTPELESIIPVPSNKTTCENWREIHHLVFHVANICFAVGLVIPTTLHLHMIFLRGMLTLGCTLYIVWATLYRCALDIMIWNSVFLGVNILHLSYLLYKKRPVKIEKELSGMYRRLFEPLRVPPDLFRRLTGQFCMIQTLKKGQTYAAEDKTSVDDRLSILLKGKMKVSYRGHFLHNIYPCAFIDSPEFRSTQMHKGEKFQVTIIADDNCRFLCWSRERLTYFLESEPFLYEIFRYLIGKDITNKLYSLNDPTLNDKKAKKLEHQLSLCTQISMLEMRNSIASSSDSDDGLHQFLRGTSSMSSLHVSSPHQRASAKMKPIEEGAEDDDDVFEPASPNTLKVHQLP.

The Extracellular portion of the chain corresponds to 1-48 (MNYTESSPLRESTAIGFTPELESIIPVPSNKTTCENWREIHHLVFHVA). N-linked (GlcNAc...) asparagine glycosylation is found at Asn2 and Asn30. Residues 49–69 (NICFAVGLVIPTTLHLHMIFL) form a helical membrane-spanning segment. A topological domain (cytoplasmic) is located at residue Arg70. The helical transmembrane segment at 71 to 91 (GMLTLGCTLYIVWATLYRCAL) threads the bilayer. A topological domain (extracellular) is located at residue Asp92. The helical transmembrane segment at 93-113 (IMIWNSVFLGVNILHLSYLLY) threads the bilayer. A required for interaction with CAV3 region spans residues 93–115 (IMIWNSVFLGVNILHLSYLLYKK). Residues 114 to 360 (KKRPVKIEKE…PNTLKVHQLP (247 aa)) are Cytoplasmic-facing. Residues 136–186 (RVPPDLFRRLTGQFCMIQTLKKGQTYAAEDKTSVDDRLSILLKGKMKVSYR) form a required for interaction with KCNK2 region. Residues Ser295 and Ser318 each carry the phosphoserine modification. Positions 317-360 (SSLHVSSPHQRASAKMKPIEEGAEDDDDVFEPASPNTLKVHQLP) are disordered. Over residues 337-346 (EGAEDDDDVF) the composition is skewed to acidic residues. The span at 350 to 360 (SPNTLKVHQLP) shows a compositional bias: polar residues.

This sequence belongs to the popeye family. In terms of assembly, homodimer. Homodimerization requires the C-terminus cytoplasmic region. Interacts (via the C-terminus cytoplasmic tail) with TJP1. Interacts (via the C-terminus cytoplasmic tail) with ARHGEF25/GEFT (via the DH domain). Interacts (via the C-terminus cytoplasmic tail) with VAMP3. Interacts with KCNK2; the interaction enhances KCNK2 surface expression and is inhibited by cAMP. Interacts with CAV3. In terms of tissue distribution, expressed in epithelial cells (at protein level). Expressed in fetal and adult heart and skeletal muscle.

The protein localises to the lateral cell membrane. It is found in the cell junction. The protein resides in the tight junction. Its subcellular location is the membrane. It localises to the cell membrane. The protein localises to the sarcolemma. It is found in the caveola. Cell adhesion molecule involved in the establishment and/or maintenance of cell integrity. Involved in the formation and regulation of the tight junction (TJ) paracellular permeability barrier in epithelial cells. Plays a role in VAMP3-mediated vesicular transport and recycling of different receptor molecules through its interaction with VAMP3. Plays a role in the regulation of cell shape and movement by modulating the Rho-family GTPase activity through its interaction with ARHGEF25/GEFT. Induces primordial adhesive contact and aggregation of epithelial cells in a Ca(2+)-independent manner. Also involved in striated muscle regeneration and repair and in the regulation of cell spreading. Important for the maintenance of cardiac function. Plays a regulatory function in heart rate dynamics mediated, at least in part, through cAMP-binding and, probably, by increasing cell surface expression of the potassium channel KCNK2 and enhancing current density. Is also a caveolae-associated protein important for the preservation of caveolae structural and functional integrity as well as for heart protection against ischemia injury. This chain is Popeye domain-containing protein 1, found in Homo sapiens (Human).